The sequence spans 209 residues: Uridine kinase (209 aa).

12–19 (GGTGSGKS) is an ATP binding site.

The protein belongs to the uridine kinase family.

It is found in the cytoplasm. The enzyme catalyses uridine + ATP = UMP + ADP + H(+). It catalyses the reaction cytidine + ATP = CMP + ADP + H(+). It participates in pyrimidine metabolism; CTP biosynthesis via salvage pathway; CTP from cytidine: step 1/3. It functions in the pathway pyrimidine metabolism; UMP biosynthesis via salvage pathway; UMP from uridine: step 1/1. The polypeptide is Uridine kinase (Clostridium tetani (strain Massachusetts / E88)).